Here is a 311-residue protein sequence, read N- to C-terminus: 2-methoxy-6-polyprenyl-1,4-benzoquinol methylase, mitochondrial (311 aa).

Residues 1 to 29 (MAAGLCPGRALLSRRGGALWALLGTARGR) constitute a mitochondrion transit peptide. Residues Thr-100, Asp-155, and 183-184 (NA) contribute to the S-adenosyl-L-methionine site.

The protein belongs to the class I-like SAM-binding methyltransferase superfamily. MenG/UbiE family. Component of a multi-subunit COQ enzyme complex, composed of at least COQ3, COQ4, COQ5, COQ6, COQ7 and COQ9.

It is found in the mitochondrion inner membrane. The catalysed reaction is a 2-methoxy-6-(all-trans-polyprenyl)benzene-1,4-diol + S-adenosyl-L-methionine = a 5-methoxy-2-methyl-3-(all-trans-polyprenyl)benzene-1,4-diol + S-adenosyl-L-homocysteine + H(+). It participates in cofactor biosynthesis; ubiquinone biosynthesis. Methyltransferase required for the conversion of 2-polyprenyl-6-methoxy-1,4-benzoquinol (DDMQH2) to 2-polyprenyl-3-methyl-6-methoxy-1,4-benzoquinol (DMQH2). This is 2-methoxy-6-polyprenyl-1,4-benzoquinol methylase, mitochondrial from Gallus gallus (Chicken).